A 64-amino-acid polypeptide reads, in one-letter code: Large ribosomal subunit protein bL35 (64 aa).

The segment covering 1–42 (MPKAKTHSGASKRFRRTGTGKIVRQKANRRHLLEHKSSKRTR) has biased composition (basic residues). Positions 1–64 (MPKAKTHSGA…TKRVKSLLNG (64 aa)) are disordered.

Belongs to the bacterial ribosomal protein bL35 family.

In Mycobacterium ulcerans (strain Agy99), this protein is Large ribosomal subunit protein bL35.